The chain runs to 639 residues: Ubiquitin-like modifier-activating enzyme ATG7 (639 aa).

Positions 322–327 match the GXGXXG motif motif; sequence GAGTLG. Cysteine 502 serves as the catalytic Glycyl thioester intermediate.

This sequence belongs to the ATG7 family. Homodimer.

The protein localises to the cytoplasm. It is found in the preautophagosomal structure. E1-like activating enzyme involved in the 2 ubiquitin-like systems required for cytoplasm to vacuole transport (Cvt) and autophagy. Activates ATG12 for its conjugation with ATG5 and ATG8 for its conjugation with phosphatidylethanolamine. Both systems are needed for the ATG8 association to Cvt vesicles and autophagosomes membranes. Autophagy is essential for maintenance of amino acid levels and protein synthesis under nitrogen starvation. Required for selective autophagic degradation of the nucleus (nucleophagy) as well as for mitophagy which contributes to regulate mitochondrial quantity and quality by eliminating the mitochondria to a basal level to fulfill cellular energy requirements and preventing excess ROS production. Plays a role in the regulation of filamentous growth and chronological longevity. The chain is Ubiquitin-like modifier-activating enzyme ATG7 (APG7) from Candida albicans (strain SC5314 / ATCC MYA-2876) (Yeast).